Consider the following 156-residue polypeptide: Small ribosomal subunit protein uS7 (156 aa).

This sequence belongs to the universal ribosomal protein uS7 family. In terms of assembly, part of the 30S ribosomal subunit. Contacts proteins S9 and S11.

One of the primary rRNA binding proteins, it binds directly to 16S rRNA where it nucleates assembly of the head domain of the 30S subunit. Is located at the subunit interface close to the decoding center, probably blocks exit of the E-site tRNA. In Bifidobacterium longum (strain NCC 2705), this protein is Small ribosomal subunit protein uS7.